We begin with the raw amino-acid sequence, 70 residues long: DNA-directed RNA polymerase subunit epsilon (70 aa).

The protein belongs to the RNA polymerase subunit epsilon family. RNAP is composed of a core of 2 alpha, a beta and a beta' subunit. The core is associated with a delta subunit, and at least one of epsilon or omega. When a sigma factor is associated with the core the holoenzyme is formed, which can initiate transcription.

It catalyses the reaction RNA(n) + a ribonucleoside 5'-triphosphate = RNA(n+1) + diphosphate. Its function is as follows. A non-essential component of RNA polymerase (RNAP). The polypeptide is DNA-directed RNA polymerase subunit epsilon (Lacticaseibacillus casei (strain BL23) (Lactobacillus casei)).